Consider the following 65-residue polypeptide: Large ribosomal subunit protein bL33c (65 aa).

This sequence belongs to the bacterial ribosomal protein bL33 family.

The protein localises to the plastid. It is found in the chloroplast. The polypeptide is Large ribosomal subunit protein bL33c (Chaetosphaeridium globosum (Charophycean green alga)).